Reading from the N-terminus, the 528-residue chain is GMP synthase [glutamine-hydrolyzing] (528 aa).

Residues 22–212 form the Glutamine amidotransferase type-1 domain; the sequence is AILVLDFGSQ…VFKICQSQTN (191 aa). Cysteine 99 functions as the Nucleophile in the catalytic mechanism. Active-site residues include histidine 186 and glutamate 188. The GMPS ATP-PPase domain maps to 213-403; the sequence is WSLESNVETI…LGIKKEALYR (191 aa). 240 to 246 is a binding site for ATP; sequence SGGTDSL.

In terms of assembly, homodimer.

The catalysed reaction is XMP + L-glutamine + ATP + H2O = GMP + L-glutamate + AMP + diphosphate + 2 H(+). Its pathway is purine metabolism; GMP biosynthesis; GMP from XMP (L-Gln route): step 1/1. In terms of biological role, catalyzes the synthesis of GMP from XMP. The polypeptide is GMP synthase [glutamine-hydrolyzing] (Borrelia garinii subsp. bavariensis (strain ATCC BAA-2496 / DSM 23469 / PBi) (Borreliella bavariensis)).